The primary structure comprises 543 residues: ATP-dependent ubiquitin transferase-like protein Cap2 (543 aa).

Positions 1–159 (MSSAAAVADV…QNCIVAHANG (159 aa)) are E2-like domain. Cysteine 84 serves as the catalytic For E2-like domain. A linker domain region spans residues 160-305 (CPLWFITDNE…YLAQRNMPNS (146 aa)). Residues 306 to 543 (KTLAGKNIAV…RDRECPLCNS (238 aa)) form an adenylation plus E1-like domain region. Active-site for E1-like domain residues include cysteine 450 and cysteine 453.

The protein in the C-terminal section; belongs to the HesA/MoeB/ThiF family. Forms a Cap2-CdnA complex. A Cap2 dimer is bound on either side by a CdnA monomer.

Functionally, CD-NTase priming component of a CBASS antiviral system. CBASS (cyclic oligonucleotide-based antiphage signaling system) provides immunity against bacteriophages. The CD-NTase protein (CdnA) synthesizes cyclic nucleotides in response to infection; these serve as specific second messenger signals. The signals activate a diverse range of effectors, leading to bacterial cell death and thus abortive phage infection. A type II-A(GA) CBASS system. Acts as a protein transferase, conjugating CdnA, the CD-NTase, to unidentified target(s) in the cell probably via an E1-E2 ubiquitin transferase-like mechanism. This primes CdnA, upon phage infection CdnA activates and makes cyclic nucleotides. Protein conjugation requires ATP. In terms of biological role, the capV-cdnA-cap2-cap3 operon provides about 10(4)-fold protection in strain BWHPSA011 against infection by phage PaMx41. In P.aeruginosa strain PAO1 it confers protection against phages PaMx41 and JBD18 but not JBD67 (JBD18 and JBD67 do not replicate in BWHPSA011 / Pa011). When acb2 in JBD67 is deleted this CBASS operon then protects against JDB67 also. This CBASS system limits prophage induction of lysogenized JBD67 as well as viral lytic replication. The polypeptide is ATP-dependent ubiquitin transferase-like protein Cap2 (Pseudomonas aeruginosa (strain BWHPSA011 / Pa011)).